Here is a 316-residue protein sequence, read N- to C-terminus: L-lactate dehydrogenase 1 (316 aa).

4 residues coordinate NAD(+): Val-17, Asp-38, Lys-43, and Tyr-69. Residues Arg-92 and Asn-124–Asp-127 contribute to the substrate site. NAD(+) is bound by residues Val-122–Asn-124 and Thr-147. Asp-152–Arg-155 lines the substrate pocket. Residue His-179 is the Proton acceptor of the active site. Thr-234 contributes to the substrate binding site.

Belongs to the LDH/MDH superfamily. LDH family. Homotetramer.

It is found in the cytoplasm. The enzyme catalyses (S)-lactate + NAD(+) = pyruvate + NADH + H(+). Its pathway is fermentation; pyruvate fermentation to lactate; (S)-lactate from pyruvate: step 1/1. In terms of biological role, catalyzes the conversion of lactate to pyruvate. The sequence is that of L-lactate dehydrogenase 1 from Bifidobacterium longum subsp. longum (strain ATCC 15707 / DSM 20219 / JCM 1217 / NCTC 11818 / E194b).